The chain runs to 186 residues: Lipid A acyltransferase PagP (186 aa).

Positions Met1–Ala25 are cleaved as a signal peptide. Catalysis depends on residues His58, Asp101, and Ser102.

Belongs to the lipid A palmitoyltransferase family. As to quaternary structure, homodimer.

It localises to the cell outer membrane. The catalysed reaction is a lipid A + a 1,2-diacyl-sn-glycero-3-phosphocholine = a hepta-acyl lipid A + a 2-acyl-sn-glycero-3-phosphocholine. The enzyme catalyses a lipid IVA + a 1,2-diacyl-sn-glycero-3-phosphocholine = a lipid IVB + a 2-acyl-sn-glycero-3-phosphocholine. It carries out the reaction a lipid IIA + a 1,2-diacyl-sn-glycero-3-phosphocholine = a lipid IIB + a 2-acyl-sn-glycero-3-phosphocholine. Its function is as follows. Transfers a fatty acid residue from the sn-1 position of a phospholipid to the N-linked hydroxyfatty acid chain on the proximal unit of lipid A or its precursors. The protein is Lipid A acyltransferase PagP of Shigella flexneri serotype X (strain 2002017).